Reading from the N-terminus, the 343-residue chain is Fructose-1,6-bisphosphatase class 1 (343 aa).

Residues glutamate 91, aspartate 113, isoleucine 115, and aspartate 116 each coordinate Mg(2+). Residues 116 to 119, asparagine 210, and lysine 276 contribute to the substrate site; that span reads DGSS. Mg(2+) is bound at residue glutamate 282.

It belongs to the FBPase class 1 family. In terms of assembly, homotetramer. It depends on Mg(2+) as a cofactor.

Its subcellular location is the cytoplasm. It carries out the reaction beta-D-fructose 1,6-bisphosphate + H2O = beta-D-fructose 6-phosphate + phosphate. It functions in the pathway carbohydrate biosynthesis; gluconeogenesis. This is Fructose-1,6-bisphosphatase class 1 from Parvibaculum lavamentivorans (strain DS-1 / DSM 13023 / NCIMB 13966).